The sequence spans 64 residues: LTCKTCPFTTCPNSESCPGGQSICYQRKWEEHHGERIERRCVANCPAFGSHDTSLLCCTRDNCN.

Disulfide bonds link Cys3-Cys24, Cys6-Cys11, Cys17-Cys41, Cys45-Cys57, and Cys58-Cys63.

The protein belongs to the three-finger toxin family. Ancestral subfamily. Expressed by the venom gland.

It localises to the secreted. Functionally, allosteric modulator of the GABA(A) receptor (GABR), possibly increasing receptor affinity for the agonist, thus enhancing receptor opening and macroscopic desensitization. In vivo, intracerebroventricular injection into mice results in periods of reduced basal activity, followed by bursts of intense seizures and death. This chain is Micrurotoxin 2, found in Micrurus mipartitus (Red-tailed coral snake).